A 390-amino-acid chain; its full sequence is 8-amino-7-oxononanoate synthase (390 aa).

R19 lines the substrate pocket. 106–107 lines the pyridoxal 5'-phosphate pocket; sequence GY. H131 contacts substrate. Residues S176, H204, and T233 each contribute to the pyridoxal 5'-phosphate site. At K236 the chain carries N6-(pyridoxal phosphate)lysine. T350 lines the substrate pocket.

Belongs to the class-II pyridoxal-phosphate-dependent aminotransferase family. BioF subfamily. As to quaternary structure, homodimer. Requires pyridoxal 5'-phosphate as cofactor.

The enzyme catalyses 6-carboxyhexanoyl-[ACP] + L-alanine + H(+) = (8S)-8-amino-7-oxononanoate + holo-[ACP] + CO2. The protein operates within cofactor biosynthesis; biotin biosynthesis. Its function is as follows. Catalyzes the decarboxylative condensation of pimeloyl-[acyl-carrier protein] and L-alanine to produce 8-amino-7-oxononanoate (AON), [acyl-carrier protein], and carbon dioxide. This Pseudomonas putida (strain W619) protein is 8-amino-7-oxononanoate synthase.